A 49-amino-acid polypeptide reads, in one-letter code: Defensin Tk-AMP-D2 (49 aa).

Cystine bridges form between Cys-3–Cys-49, Cys-14–Cys-34, Cys-20–Cys-43, and Cys-24–Cys-45.

In terms of biological role, plant defense peptide. In Triticum kiharae (Wheat), this protein is Defensin Tk-AMP-D2.